We begin with the raw amino-acid sequence, 749 residues long: Probable serine/threonine-protein kinase fhkD (749 aa).

The FHA domain occupies 47 to 150 (IFFGRNPKRC…NGTFVKGCIL (104 aa)). Residues 84 to 126 (NNNNNDGDNNNNNNNNNNNNNNNNNNNNNNNNNNNNNNNNNNN) are compositionally biased toward low complexity. Positions 84-130 (NNNNNDGDNNNNNNNNNNNNNNNNNNNNNNNNNNNNNNNNNNNTTKN) are disordered. One can recognise a Protein kinase domain in the interval 199–472 (YSIQGILGTG…TKGALSHDWF (274 aa)). ATP contacts are provided by residues 205 to 213 (LGTGNFSVV) and K228. D323 serves as the catalytic Proton acceptor. Disordered stretches follow at residues 512-620 (NIPM…PAII) and 640-749 (CTPT…LKGS). The span at 516-561 (TLNSTTTNTTSPNNNNNNNNNNNNKNNNKNIIKSLNSNSNNYNNNS) shows a compositional bias: low complexity. The span at 562–572 (VLKKTSQSPKT) shows a compositional bias: polar residues. 2 stretches are compositionally biased toward low complexity: residues 590–611 (NNNNNNNNNNNNNNNNNNNNNN) and 651–667 (TNSTTTSTATSMPTSNS). Residues 668–687 (VTMGTSSTSIPVSNSITMKS) are compositionally biased toward polar residues. Over residues 696–707 (DGDKKRKEKESS) the composition is skewed to basic and acidic residues. The segment covering 708–739 (SSENVNDVIVINSNNHNNNNNNNHNINNGISS) has biased composition (low complexity).

The protein belongs to the protein kinase superfamily. CAMK Ser/Thr protein kinase family. CHK2 subfamily.

It carries out the reaction L-seryl-[protein] + ATP = O-phospho-L-seryl-[protein] + ADP + H(+). The catalysed reaction is L-threonyl-[protein] + ATP = O-phospho-L-threonyl-[protein] + ADP + H(+). This chain is Probable serine/threonine-protein kinase fhkD (fhkD), found in Dictyostelium discoideum (Social amoeba).